Reading from the N-terminus, the 378-residue chain is Protein FAM170B (378 aa).

Disordered regions lie at residues 1-56 (MKHH…LPDD), 244-265 (TRDQ…DSSE), and 277-378 (QQQP…QQGK). 2 stretches are compositionally biased toward low complexity: residues 277-339 (QQQP…QPLQ) and 349-378 (PQKQ…QQGK).

The protein belongs to the FAM170 family. As to quaternary structure, interacts with GOPC. In terms of tissue distribution, exclusively expressed in adult testis (at protein level). Expression first started at postnatal week 3 in round spermatids, elongated spermatids and mature sperm.

The protein localises to the cytoplasmic vesicle. It localises to the secretory vesicle. It is found in the acrosome. Its subcellular location is the acrosome outer membrane. Functionally, plays a role in fertilization through the acrosome reaction. The sequence is that of Protein FAM170B from Mus musculus (Mouse).